Consider the following 62-residue polypeptide: DNA-binding protein 7 (62 aa).

Belongs to the 7 kDa DNA-binding/endoribonuclease P2 family. In terms of assembly, monomer.

The protein localises to the cytoplasm. Can constrain negative DNA supercoils. May be involved in maintaining the integrity of the genome at high temperature. The chain is DNA-binding protein 7 from Metallosphaera sedula (strain ATCC 51363 / DSM 5348 / JCM 9185 / NBRC 15509 / TH2).